We begin with the raw amino-acid sequence, 148 residues long: STSTSTSDYSAADRAELAALSKVLAQNAEAFGAEALARMFTVYAATKSYFKDYKDFTAAAPSIKAHGAKVVTALAKACDHLDDLKTHLHKLATFHGSELKVDPANFQYLSYCLEVALAVHLTEFSPETHCALDKFLTNVCHELSSRYR.

Ser-1 carries the post-translational modification N-acetylserine. One can recognise a Globin domain in the interval 8 to 148; that stretch reads DYSAADRAEL…VCHELSSRYR (141 aa). An O2-binding site is contributed by His-66. Heme b is bound at residue His-95.

The protein belongs to the globin family. As to quaternary structure, heterotetramer of two alpha chains and two beta chains. In terms of tissue distribution, red blood cells.

In terms of biological role, involved in oxygen transport from the lung to the various peripheral tissues. This is Hemoglobin subunit alpha (HBA) from Heterodontus portusjacksoni (Port Jackson shark).